The primary structure comprises 137 residues: Large ribosomal subunit protein bL12 (137 aa).

The protein belongs to the bacterial ribosomal protein bL12 family. Homodimer. Part of the ribosomal stalk of the 50S ribosomal subunit. Forms a multimeric L10(L12)X complex, where L10 forms an elongated spine to which 2 to 4 L12 dimers bind in a sequential fashion. Binds GTP-bound translation factors.

Forms part of the ribosomal stalk which helps the ribosome interact with GTP-bound translation factors. Is thus essential for accurate translation. The sequence is that of Large ribosomal subunit protein bL12 from Gloeobacter violaceus (strain ATCC 29082 / PCC 7421).